Consider the following 176-residue polypeptide: Large ribosomal subunit protein eL20 (176 aa).

A Glycyl lysine isopeptide (Lys-Gly) (interchain with G-Cter in SUMO2) cross-link involves residue Lys-11. Tyr-63 carries the phosphotyrosine modification. A Phosphoserine modification is found at Ser-71. Lys-76 carries the post-translational modification N6-succinyllysine. A Phosphoserine modification is found at Ser-123. Glycyl lysine isopeptide (Lys-Gly) (interchain with G-Cter in SUMO2) cross-links involve residues Lys-128 and Lys-170.

Belongs to the eukaryotic ribosomal protein eL20 family. As to quaternary structure, component of the large ribosomal subunit. Binds IPO9 with high affinity.

The protein localises to the cytoplasm. Component of the large ribosomal subunit. The ribosome is a large ribonucleoprotein complex responsible for the synthesis of proteins in the cell. This is Large ribosomal subunit protein eL20 (RPL18A) from Oryctolagus cuniculus (Rabbit).